Consider the following 363-residue polypeptide: Protein RecA (363 aa).

79–86 (GPESSGKT) contributes to the ATP binding site.

Belongs to the RecA family.

Its subcellular location is the cytoplasm. Can catalyze the hydrolysis of ATP in the presence of single-stranded DNA, the ATP-dependent uptake of single-stranded DNA by duplex DNA, and the ATP-dependent hybridization of homologous single-stranded DNAs. It interacts with LexA causing its activation and leading to its autocatalytic cleavage. This Borrelia duttonii (strain Ly) protein is Protein RecA.